A 222-amino-acid polypeptide reads, in one-letter code: ATP-dependent dethiobiotin synthetase BioD (222 aa).

12–17 (DVGKTF) serves as a coordination point for ATP. Thr-16 serves as a coordination point for Mg(2+). Lys-37 is a catalytic residue. Position 41 (Ser-41) interacts with substrate. Residues Asp-54 and 113–116 (EGAG) contribute to the ATP site. Positions 54 and 113 each coordinate Mg(2+).

It belongs to the dethiobiotin synthetase family. In terms of assembly, homodimer. Requires Mg(2+) as cofactor.

It is found in the cytoplasm. It catalyses the reaction (7R,8S)-7,8-diammoniononanoate + CO2 + ATP = (4R,5S)-dethiobiotin + ADP + phosphate + 3 H(+). It participates in cofactor biosynthesis; biotin biosynthesis; biotin from 7,8-diaminononanoate: step 1/2. Its function is as follows. Catalyzes a mechanistically unusual reaction, the ATP-dependent insertion of CO2 between the N7 and N8 nitrogen atoms of 7,8-diaminopelargonic acid (DAPA, also called 7,8-diammoniononanoate) to form a ureido ring. In Anoxybacillus flavithermus (strain DSM 21510 / WK1), this protein is ATP-dependent dethiobiotin synthetase BioD.